The sequence spans 442 residues: UDP-glycosyltransferase 78D4 (442 aa).

UDP-alpha-D-glucose-binding positions include 322–324, 339–347, and 361–364; these read APQ, HGGWNSVLE, and FGDH.

The protein belongs to the UDP-glycosyltransferase family.

This chain is UDP-glycosyltransferase 78D4 (UGT78D4), found in Arabidopsis thaliana (Mouse-ear cress).